The primary structure comprises 471 residues: Light-independent protochlorophyllide reductase subunit N (471 aa).

[4Fe-4S] cluster is bound by residues Cys-22, Cys-47, and Cys-107.

Belongs to the BchN/ChlN family. In terms of assembly, protochlorophyllide reductase is composed of three subunits; ChlL, ChlN and ChlB. Forms a heterotetramer of two ChlB and two ChlN subunits. It depends on [4Fe-4S] cluster as a cofactor.

The protein localises to the plastid. The protein resides in the chloroplast. It carries out the reaction chlorophyllide a + oxidized 2[4Fe-4S]-[ferredoxin] + 2 ADP + 2 phosphate = protochlorophyllide a + reduced 2[4Fe-4S]-[ferredoxin] + 2 ATP + 2 H2O. It functions in the pathway porphyrin-containing compound metabolism; chlorophyll biosynthesis (light-independent). Its function is as follows. Component of the dark-operative protochlorophyllide reductase (DPOR) that uses Mg-ATP and reduced ferredoxin to reduce ring D of protochlorophyllide (Pchlide) to form chlorophyllide a (Chlide). This reaction is light-independent. The NB-protein (ChlN-ChlB) is the catalytic component of the complex. The protein is Light-independent protochlorophyllide reductase subunit N of Anthoceros angustus (Hornwort).